We begin with the raw amino-acid sequence, 188 residues long: dCTP deaminase (188 aa).

DCTP contacts are provided by residues 111–116, 135–137, glutamine 156, tyrosine 170, and glutamine 180; these read KSTYAR and TLE. The Proton donor/acceptor role is filled by glutamate 137.

This sequence belongs to the dCTP deaminase family. Homotrimer.

The catalysed reaction is dCTP + H2O + H(+) = dUTP + NH4(+). It participates in pyrimidine metabolism; dUMP biosynthesis; dUMP from dCTP (dUTP route): step 1/2. Its function is as follows. Catalyzes the deamination of dCTP to dUTP. The chain is dCTP deaminase from Polaromonas sp. (strain JS666 / ATCC BAA-500).